We begin with the raw amino-acid sequence, 116 residues long: Putative UPF0320 protein YJR162C (116 aa).

Belongs to the UPF0320 family.

The chain is Putative UPF0320 protein YJR162C from Saccharomyces cerevisiae (strain ATCC 204508 / S288c) (Baker's yeast).